Here is a 307-residue protein sequence, read N- to C-terminus: Estrogen receptor (307 aa).

A DNA-binding region (nuclear receptor) is located at residues 1–43; the sequence is GHNDYMCPATNQCTIDKNRRKSCQACRLRKCYEVGMMKGGIRK. The NR C4-type zinc finger occupies 7–31; that stretch reads CPATNQCTIDKNRRKSCQACRLRKC. Positions 44–95 are hinge; sequence DRRGGRILKHKRQREEHDNRNAGAIVERRSPNLWPSPLMITHNKKNSPALSL. Residues 96–307 enclose the NR LBD domain; that stretch reads TADQIVSALL…HFRHMSNKGM (212 aa).

It belongs to the nuclear hormone receptor family. NR3 subfamily. As to quaternary structure, binds DNA as a homodimer. Can form a heterodimer with ER-beta.

The protein localises to the nucleus. The steroid hormones and their receptors are involved in the regulation of eukaryotic gene expression and affect cellular proliferation and differentiation in target tissues. The chain is Estrogen receptor (ESR1) from Aspidoscelis uniparens (Desert grassland whiptail lizard).